The primary structure comprises 174 residues: ATP-dependent protease subunit HslV (174 aa).

Residue T2 is part of the active site. Residues G157, C160, and T163 each coordinate Na(+).

Belongs to the peptidase T1B family. HslV subfamily. As to quaternary structure, a double ring-shaped homohexamer of HslV is capped on each side by a ring-shaped HslU homohexamer. The assembly of the HslU/HslV complex is dependent on binding of ATP.

The protein localises to the cytoplasm. The catalysed reaction is ATP-dependent cleavage of peptide bonds with broad specificity.. Its activity is regulated as follows. Allosterically activated by HslU binding. Protease subunit of a proteasome-like degradation complex believed to be a general protein degrading machinery. The polypeptide is ATP-dependent protease subunit HslV (Shewanella halifaxensis (strain HAW-EB4)).